The sequence spans 370 residues: Proline-rich protein 5-like (370 aa).

Residue serine 28 is modified to Phosphoserine. Positions 327–370 (PTFPPPHRQCSSEPSILDSPDEMELEDVASGSQEDSELNCASLS) are disordered.

It belongs to the PROTOR family. Interacts with the mammalian target of rapamycin complex 2 (mTORC2) which contains MTOR, MLST8, PRR5, RICTOR, MAPKAP1 and DEPTOR. Interacts with RFFL. Interacts (via C-terminus) with ZFP36 (via C-terminus); this interaction may accelerate ZFP36-mediated mRNA decay during stress. Interacts with RICTOR. Ubiquitinated. Ubiquitination by RFFL promotes proteasomal degradation of PRR5L thereby modifying the substrate-specific activity of the mTORC2 complex. Ubiquitination by RFFL is stimulated by LPA/lysophosphatidic acid.

Functionally, associates with the mTORC2 complex that regulates cellular processes including survival and organization of the cytoskeleton. Regulates the activity of the mTORC2 complex in a substrate-specific manner preventing for instance the specific phosphorylation of PKCs and thereby controlling cell migration. Plays a role in the stimulation of ZFP36-mediated mRNA decay of several ZFP36-associated mRNAs, such as TNF-alpha and GM-CSF, in response to stress. Required for ZFP36 localization to cytoplasmic stress granule (SG) and P-body (PB) in response to stress. The polypeptide is Proline-rich protein 5-like (Prr5l) (Rattus norvegicus (Rat)).